Consider the following 216-residue polypeptide: MSARQPAIADTALVTAIDAVIEAGRRSAERGWVPATSGNFSVRVDAERIAVTRSGVDKGRLTPNDVLCQQLSQPLVAGSSAEAELHRRLYADDAEIGAVFHTHAVSATVLAQLHRGERLLTLSGWELQKALAGIRSHETVVEVPVVANDQDVVALANEVAARLAAPVAAGAVRAPGYLIAGHGLYAWGHTAVDAFRHLEALDVLFTQILTLRRHAS.

Positions 101 and 103 each coordinate Zn(2+).

The protein belongs to the aldolase class II family. MtnB subfamily. It depends on Zn(2+) as a cofactor.

It catalyses the reaction 5-(methylsulfanyl)-D-ribulose 1-phosphate = 5-methylsulfanyl-2,3-dioxopentyl phosphate + H2O. It functions in the pathway amino-acid biosynthesis; L-methionine biosynthesis via salvage pathway; L-methionine from S-methyl-5-thio-alpha-D-ribose 1-phosphate: step 2/6. Its function is as follows. Catalyzes the dehydration of methylthioribulose-1-phosphate (MTRu-1-P) into 2,3-diketo-5-methylthiopentyl-1-phosphate (DK-MTP-1-P). The sequence is that of Methylthioribulose-1-phosphate dehydratase from Bradyrhizobium sp. (strain BTAi1 / ATCC BAA-1182).